We begin with the raw amino-acid sequence, 617 residues long: Zinc finger protein 221 (617 aa).

The KRAB domain maps to 30–100 (VTFKDVAVVF…KTTSQREGNS (71 aa)). 3 C2H2-type zinc fingers span residues 170–192 (YRCN…QQSH), 198–220 (HTCG…QRVH), and 226–248 (YKCD…QRVH). The segment at 254-276 (FKCGQCGKGFHSRSALNVHCKLH) adopts a C2H2-type 4; degenerate zinc-finger fold. 11 consecutive C2H2-type zinc fingers follow at residues 282–304 (YNCE…QRIH), 310–332 (FKCD…SMVH), 338–360 (FRCD…SMVH), 366–388 (YKCE…QMVH), 394–416 (YNCK…QQVH), 422–444 (FKCE…QRSH), 450–472 (YNCE…QRVH), 478–500 (YNCK…QRLH), 506–528 (FKCE…QTCH), 534–556 (YKCE…QRVH), and 562–584 (YNCK…QRLH).

Belongs to the krueppel C2H2-type zinc-finger protein family.

It localises to the nucleus. Its function is as follows. May be involved in transcriptional regulation. The protein is Zinc finger protein 221 (ZNF221) of Homo sapiens (Human).